A 254-amino-acid polypeptide reads, in one-letter code: Alcohol dehydrogenase (254 aa).

10–33 contacts NAD(+); it reads FVAGLGGIGLDTSREIVKSGPKNL. Residue S138 coordinates substrate. Y151 acts as the Proton acceptor in catalysis.

This sequence belongs to the short-chain dehydrogenases/reductases (SDR) family. In terms of assembly, homodimer.

The enzyme catalyses a primary alcohol + NAD(+) = an aldehyde + NADH + H(+). It carries out the reaction a secondary alcohol + NAD(+) = a ketone + NADH + H(+). This is Alcohol dehydrogenase (Adh) from Drosophila adiastola (Fruit fly).